A 523-amino-acid polypeptide reads, in one-letter code: MNNIHNHKILILDFGSQYTQLIARRVREIGVYCELWAWDVSEADIREFNPTGIILSGGPESTTEENSPRAPEYVFNAGVPVLGICYGMQTMAMQLGGLTETSTHREFGYASVNLKAADALFAQLNDDVTSSQPKLDVWMSHGDKVTRLPDHFQVTAMTSTCPIAAMSDERRRFYGVQFHPEVTHTKSGLELLTNFVVKICGCERNWTPENIIEDAVARLKAQVGDDEVILGLSGGVDSSVTALLLHRAIGKNLHCVFVDNGLLRLNEAEQVMEMFGDKFGLNIIHVKAEDRFLDALKGIDEPEAKRKMIGKVFVDVFDDESKKLTSVKWLAQGTIYPDVIESAASKTGKAHVIKSHHNVGGLPDYMKLGLVEPLRELFKDEVRKIGLALGLPAEMLNRHPFPGPGLGVRVLGEIKKEYCDLVRLADAIFMEELHASGWYYKVSQAFTVFLPVKSVGVMGDGRKYDWVVSLRAVETIDFMTAHWAHLPYDLLGKISNRIINEVNGISRVVYDVSGKPPATIEWE.

The Glutamine amidotransferase type-1 domain occupies 8–205; it reads KILILDFGSQ…VVKICGCERN (198 aa). Residue Cys85 is the Nucleophile of the active site. Active-site residues include His179 and Glu181. The GMPS ATP-PPase domain maps to 206–398; the sequence is WTPENIIEDA…LGLPAEMLNR (193 aa). 233–239 lines the ATP pocket; the sequence is SGGVDSS.

In terms of assembly, homodimer.

The catalysed reaction is XMP + L-glutamine + ATP + H2O = GMP + L-glutamate + AMP + diphosphate + 2 H(+). It participates in purine metabolism; GMP biosynthesis; GMP from XMP (L-Gln route): step 1/1. In terms of biological role, catalyzes the synthesis of GMP from XMP. The polypeptide is GMP synthase [glutamine-hydrolyzing] (Pasteurella multocida (strain Pm70)).